Reading from the N-terminus, the 419-residue chain is DNA polymerase IV (419 aa).

Positions 12 to 193 constitute a UmuC domain; sequence IFHIDMNCFY…MSVEEMYGIG (182 aa). Residues D16 and D112 each contribute to the Mg(2+) site. Residue E113 is part of the active site. The segment at 388–419 is disordered; that stretch reads IITSQKNKNESQENQQPRTSFQKDFLDDYKKP.

It belongs to the DNA polymerase type-Y family. As to quaternary structure, monomer. Mg(2+) is required as a cofactor.

Its subcellular location is the cytoplasm. It carries out the reaction DNA(n) + a 2'-deoxyribonucleoside 5'-triphosphate = DNA(n+1) + diphosphate. Functionally, poorly processive, error-prone DNA polymerase involved in untargeted mutagenesis. Copies undamaged DNA at stalled replication forks, which arise in vivo from mismatched or misaligned primer ends. These misaligned primers can be extended by PolIV. Exhibits no 3'-5' exonuclease (proofreading) activity. May be involved in translesional synthesis, in conjunction with the beta clamp from PolIII. The polypeptide is DNA polymerase IV (Oceanobacillus iheyensis (strain DSM 14371 / CIP 107618 / JCM 11309 / KCTC 3954 / HTE831)).